A 101-amino-acid chain; its full sequence is NAD(P)H-quinone oxidoreductase subunit 4L, chloroplastic (101 aa).

3 consecutive transmembrane segments (helical) span residues 2 to 22 (MLEH…YGLI), 32 to 52 (MCLE…SDLF), and 61 to 81 (IFSI…PAIV).

It belongs to the complex I subunit 4L family. In terms of assembly, NDH is composed of at least 16 different subunits, 5 of which are encoded in the nucleus.

The protein localises to the plastid. It localises to the chloroplast thylakoid membrane. It carries out the reaction a plastoquinone + NADH + (n+1) H(+)(in) = a plastoquinol + NAD(+) + n H(+)(out). It catalyses the reaction a plastoquinone + NADPH + (n+1) H(+)(in) = a plastoquinol + NADP(+) + n H(+)(out). Functionally, NDH shuttles electrons from NAD(P)H:plastoquinone, via FMN and iron-sulfur (Fe-S) centers, to quinones in the photosynthetic chain and possibly in a chloroplast respiratory chain. The immediate electron acceptor for the enzyme in this species is believed to be plastoquinone. Couples the redox reaction to proton translocation, and thus conserves the redox energy in a proton gradient. The protein is NAD(P)H-quinone oxidoreductase subunit 4L, chloroplastic of Nymphaea alba (White water-lily).